The sequence spans 33 residues: Cecropin-C (33 aa).

Residue Lys21 is modified to 5-hydroxylysine.

As to quaternary structure, monomer. As to expression, hemolymph.

It is found in the secreted. Cecropins have lytic and antibacterial activity against several Gram-positive and Gram-negative bacteria. Also has activity against fungi. In Heliothis virescens (Tobacco budworm moth), this protein is Cecropin-C.